Consider the following 455-residue polypeptide: GTPase Der (455 aa).

2 EngA-type G domains span residues 4 to 169 (PVVA…PPKD) and 178 to 353 (IQMA…EQHR). GTP contacts are provided by residues 10 to 17 (GRPNVGKS), 57 to 61 (DTGGL), 120 to 123 (NKCE), 184 to 191 (GRPNVGKS), 231 to 235 (DTAGI), and 296 to 299 (NKWD). The 86-residue stretch at 354–439 (RRVSTSVVNE…PVKLYWRGKQ (86 aa)) folds into the KH-like domain.

This sequence belongs to the TRAFAC class TrmE-Era-EngA-EngB-Septin-like GTPase superfamily. EngA (Der) GTPase family. As to quaternary structure, associates with the 50S ribosomal subunit.

Its function is as follows. GTPase that plays an essential role in the late steps of ribosome biogenesis. The sequence is that of GTPase Der from Parasynechococcus marenigrum (strain WH8102).